The primary structure comprises 182 residues: tRNA-splicing endonuclease (182 aa).

Active-site residues include Tyr119, His127, and Lys158.

Belongs to the tRNA-intron endonuclease family. Archaeal short subfamily. Homotetramer; although the tetramer contains four active sites, only two participate in the cleavage. Therefore, it should be considered as a dimer of dimers.

The catalysed reaction is pretRNA = a 3'-half-tRNA molecule with a 5'-OH end + a 5'-half-tRNA molecule with a 2',3'-cyclic phosphate end + an intron with a 2',3'-cyclic phosphate and a 5'-hydroxyl terminus.. Endonuclease that removes tRNA introns. Cleaves pre-tRNA at the 5'- and 3'-splice sites to release the intron. The products are an intron and two tRNA half-molecules bearing 2',3' cyclic phosphate and 5'-OH termini. Recognizes a pseudosymmetric substrate in which 2 bulged loops of 3 bases are separated by a stem of 4 bp. The sequence is that of tRNA-splicing endonuclease from Saccharolobus islandicus (strain L.S.2.15 / Lassen #1) (Sulfolobus islandicus).